Here is a 280-residue protein sequence, read N- to C-terminus: MAISKKILPLLSIATIFLLLLNKAHSLGSLSFGYNNFEQGDERNLILQGDATFSASKGIQLTKVDDNGTPAKSTVGRVLHSTQVRLWEKSTNRLTNFQAQFSFVINSPIDNGADGIAFFIAAPDSEIPKNSAGGTLGLSDPSTAQNPSANQVLAVEFDTFYAQDSNGWDPNYQHIGFDVDPIKSAATTKWERRNGQTLNVLVSYDANSKNLQVTASYPDGQSYQVSYNVDLRDYLPEWGRVGFSAASGQQYQSHGLQSWSFTSTLLYTSPHYLKLGRFMI.

The signal sequence occupies residues 1–26 (MAISKKILPLLSIATIFLLLLNKAHS). Asp-114 and Gly-134 together coordinate a carbohydrate. Glu-156 and Asp-158 together coordinate Mn(2+). Ca(2+) contacts are provided by Asp-158 and Phe-160. Ser-165 and Asn-166 together coordinate a carbohydrate. Ca(2+)-binding residues include Asn-166 and Asp-169. 2 residues coordinate Mn(2+): Asp-169 and His-174. 2 residues coordinate a carbohydrate: Gly-248 and Gln-250.

This sequence belongs to the leguminous lectin family. In terms of assembly, homodimer. In terms of processing, glycosylated.

Alpha-methyl-D-mannoside-specific lectin. Has hemagglutinating activity towards rabbit erythrocytes. Binds to cytokinins and significantly inhibits physiological effects of cytokinin activity such as cotyledon expansion and delayed leaf senescence. The chain is Alpha-methyl-mannoside-specific lectin from Arachis hypogaea (Peanut).